The sequence spans 331 residues: tRNA (guanine-N(7)-)-methyltransferase (331 aa).

S-adenosyl-L-methionine contacts are provided by E29, E55, and D105. D105 is an active-site residue. 2 residues coordinate substrate: K109 and D141.

Belongs to the class I-like SAM-binding methyltransferase superfamily. TrmB family.

The enzyme catalyses guanosine(46) in tRNA + S-adenosyl-L-methionine = N(7)-methylguanosine(46) in tRNA + S-adenosyl-L-homocysteine. It participates in tRNA modification; N(7)-methylguanine-tRNA biosynthesis. In terms of biological role, catalyzes the formation of N(7)-methylguanine at position 46 (m7G46) in tRNA. The chain is tRNA (guanine-N(7)-)-methyltransferase from Deinococcus geothermalis (strain DSM 11300 / CIP 105573 / AG-3a).